The chain runs to 232 residues: Small ribosomal subunit protein uS3 (232 aa).

The KH type-2 domain occupies 39-107 (VRQYLTKELK…PAQINIAEVR (69 aa)).

Belongs to the universal ribosomal protein uS3 family. In terms of assembly, part of the 30S ribosomal subunit. Forms a tight complex with proteins S10 and S14.

Functionally, binds the lower part of the 30S subunit head. Binds mRNA in the 70S ribosome, positioning it for translation. In Aliivibrio fischeri (strain MJ11) (Vibrio fischeri), this protein is Small ribosomal subunit protein uS3.